A 389-amino-acid polypeptide reads, in one-letter code: 8-amino-7-oxononanoate synthase 2 (389 aa).

Position 21 (Arg-21) interacts with substrate. A pyridoxal 5'-phosphate-binding site is contributed by 108 to 109 (GY). Residue His-133 participates in substrate binding. Pyridoxal 5'-phosphate contacts are provided by residues Ser-180, 205 to 208 (DDAH), and 234 to 237 (TLSK). Lys-237 is subject to N6-(pyridoxal phosphate)lysine. Thr-351 lines the substrate pocket.

It belongs to the class-II pyridoxal-phosphate-dependent aminotransferase family. BioF subfamily. As to quaternary structure, homodimer. Pyridoxal 5'-phosphate is required as a cofactor.

The catalysed reaction is 6-carboxyhexanoyl-[ACP] + L-alanine + H(+) = (8S)-8-amino-7-oxononanoate + holo-[ACP] + CO2. It participates in cofactor biosynthesis; biotin biosynthesis. In terms of biological role, catalyzes the decarboxylative condensation of pimeloyl-[acyl-carrier protein] and L-alanine to produce 8-amino-7-oxononanoate (AON), [acyl-carrier protein], and carbon dioxide. This Bacillus subtilis (strain 168) protein is 8-amino-7-oxononanoate synthase 2 (bioF).